The sequence spans 204 residues: Peptide deformylase (204 aa).

The Fe cation site is built by C131 and H174. E175 is an active-site residue. H178 lines the Fe cation pocket.

This sequence belongs to the polypeptide deformylase family. Fe(2+) serves as cofactor.

The catalysed reaction is N-terminal N-formyl-L-methionyl-[peptide] + H2O = N-terminal L-methionyl-[peptide] + formate. Functionally, removes the formyl group from the N-terminal Met of newly synthesized proteins. Requires at least a dipeptide for an efficient rate of reaction. N-terminal L-methionine is a prerequisite for activity but the enzyme has broad specificity at other positions. The chain is Peptide deformylase from Streptococcus pyogenes serotype M1.